A 363-amino-acid polypeptide reads, in one-letter code: MDNYTYSELLKSLQNKCDNIALIIKPEKIKQELERIEKEQEDPNFWQDVLKARDTNKEKVRLNRLLETYQKMKNSLDESVELFELAQNDSDEVTLSLLYEEAPTLEHSVQKVEIEIMLSGENDASNAIITIQPGAGGTESQDWASILYRMYLRWAERKSFKSEILDYQDGEEAGIKGVAFIIKGENAYGYLKNENGVHRLVRISPFDANAKRHTSFASVQISPELDDDIDIEIDEKDVRYDYYRASGAGGQHVNKTESAVRITHFPTGIVVQCQNDRSQHKNKASALKMLKSKLYELELEKQQSSAKNEEKSEIGWGHQIRSYVLAPYQQVKDARSNIAYSNVEAILDGDIDAILEGVLIAKA.

Position 251 is an N5-methylglutamine (glutamine 251).

It belongs to the prokaryotic/mitochondrial release factor family. Post-translationally, methylated by PrmC. Methylation increases the termination efficiency of RF2.

Its subcellular location is the cytoplasm. Peptide chain release factor 2 directs the termination of translation in response to the peptide chain termination codons UGA and UAA. The polypeptide is Peptide chain release factor 2 (prfB) (Helicobacter pylori (strain J99 / ATCC 700824) (Campylobacter pylori J99)).